The primary structure comprises 331 residues: Putative peptidyl-prolyl cis-trans isomerase RC0542 (331 aa).

Residues 33 to 54 are disordered; that stretch reads EQTASNNSSTDENQTSINNEPP. A PPIase FKBP-type domain is found at 128–226; sequence GHVVTVFYQI…SNEVKIYDDE (99 aa).

It catalyses the reaction [protein]-peptidylproline (omega=180) = [protein]-peptidylproline (omega=0). This chain is Putative peptidyl-prolyl cis-trans isomerase RC0542, found in Rickettsia conorii (strain ATCC VR-613 / Malish 7).